The sequence spans 253 residues: 2,3-bisphosphoglycerate-dependent phosphoglycerate mutase (253 aa).

Substrate contacts are provided by residues 12–19, 25–26, Arg-64, 91–94, Lys-102, 118–119, and 187–188; these read RHGESEWN, TG, ERHY, RR, and GN. His-13 functions as the Tele-phosphohistidine intermediate in the catalytic mechanism. Glu-91 acts as the Proton donor/acceptor in catalysis.

This sequence belongs to the phosphoglycerate mutase family. BPG-dependent PGAM subfamily.

It carries out the reaction (2R)-2-phosphoglycerate = (2R)-3-phosphoglycerate. It functions in the pathway carbohydrate degradation; glycolysis; pyruvate from D-glyceraldehyde 3-phosphate: step 3/5. Its function is as follows. Catalyzes the interconversion of 2-phosphoglycerate and 3-phosphoglycerate. In Streptomyces griseus subsp. griseus (strain JCM 4626 / CBS 651.72 / NBRC 13350 / KCC S-0626 / ISP 5235), this protein is 2,3-bisphosphoglycerate-dependent phosphoglycerate mutase.